Reading from the N-terminus, the 763-residue chain is Hormone-sensitive lipase (763 aa).

Positions 350–352 (HGG) match the Involved in the stabilization of the negatively charged intermediate by the formation of the oxyanion hole motif. Serine 424 is an active-site residue. Serine 552 is modified (phosphoserine). Serine 554 carries the post-translational modification Phosphoserine; by AMPK. Serine 595, serine 627, and serine 649 each carry phosphoserine. Basic and acidic residues predominate over residues 616–627 (AREEAEAKEGLS). A disordered region spans residues 616 to 652 (AREEAEAKEGLSAKDGSSRVSNAFPEGFHPRRTSQGA). Active-site residues include aspartate 692 and histidine 722.

Belongs to the 'GDXG' lipolytic enzyme family. As to quaternary structure, monomer and homodimer. Interacts with CAVIN1 in the adipocyte cytoplasm. Interacts with PLIN5. Post-translationally, phosphorylation by AMPK reduces its translocation towards the lipid droplets.

The protein resides in the cell membrane. It localises to the membrane. The protein localises to the caveola. It is found in the cytoplasm. Its subcellular location is the cytosol. The protein resides in the lipid droplet. It catalyses the reaction a diacylglycerol + H2O = a monoacylglycerol + a fatty acid + H(+). It carries out the reaction a triacylglycerol + H2O = a diacylglycerol + a fatty acid + H(+). The enzyme catalyses a monoacylglycerol + H2O = glycerol + a fatty acid + H(+). The catalysed reaction is Hydrolyzes glycerol monoesters of long-chain fatty acids.. It catalyses the reaction 1,2-di-(9Z-octadecenoyl)-glycerol + (9Z)-octadecenoate + H(+) = 1,2,3-tri-(9Z-octadecenoyl)-glycerol + H2O. It carries out the reaction 2,3-di-(9Z)-octadecenoyl-sn-glycerol + H2O = 2-(9Z-octadecenoyl)-glycerol + (9Z)-octadecenoate + H(+). The enzyme catalyses cholesteryl (9Z-octadecenoate) + H2O = cholesterol + (9Z)-octadecenoate + H(+). The catalysed reaction is 1,2,3-tri-(9Z-octadecenoyl)-glycerol + H2O = di-(9Z)-octadecenoylglycerol + (9Z)-octadecenoate + H(+). It catalyses the reaction all-trans-retinyl hexadecanoate + H2O = all-trans-retinol + hexadecanoate + H(+). It carries out the reaction 1,2-di-(9Z-octadecenoyl)-glycerol + H2O = (9Z-octadecenoyl)-glycerol + (9Z)-octadecenoate + H(+). The enzyme catalyses 2-(5Z,8Z,11Z,14Z-eicosatetraenoyl)-glycerol + H2O = glycerol + (5Z,8Z,11Z,14Z)-eicosatetraenoate + H(+). The catalysed reaction is 1-(9Z-octadecenoyl)-glycerol + H2O = glycerol + (9Z)-octadecenoate + H(+). It catalyses the reaction 2-(9Z-octadecenoyl)-glycerol + H2O = glycerol + (9Z)-octadecenoate + H(+). It carries out the reaction 1-O-hexadecyl-2-acetyl-sn-glycerol + H2O = 1-O-hexadecyl-sn-glycerol + acetate + H(+). The enzyme catalyses 1,2-di-(9Z-octadecenoyl)-sn-glycerol + H2O = (9Z-octadecenoyl)-glycerol + (9Z)-octadecenoate + H(+). The catalysed reaction is 1,3-di-(9Z-octadecenoyl)-glycerol + H2O = 1-(9Z-octadecenoyl)-glycerol + (9Z)-octadecenoate + H(+). It catalyses the reaction 1,2-di-(9Z-octadecenoyl)-glycerol + H2O = 2-(9Z-octadecenoyl)-glycerol + (9Z)-octadecenoate + H(+). Its pathway is glycerolipid metabolism; triacylglycerol degradation. In terms of biological role, lipase with broad substrate specificity, catalyzing the hydrolysis of triacylglycerols (TAGs), diacylglycerols (DAGs), monoacylglycerols (MAGs), cholesteryl esters and retinyl esters. Shows a preferential hydrolysis of DAGs over TAGs and MAGs. Preferentially hydrolyzes fatty acid (FA) esters at the sn-3 position of the glycerol backbone in DAGs and FA esters at the sn-1 and sn-2 positions of the glycerol backbone in TAGs. Catalyzes the hydrolysis of 2-arachidonoylglycerol, an endocannabinoid and of 2-acetyl monoalkylglycerol ether, the penultimate precursor of the pathway for de novo synthesis of platelet-activating factor. In adipose tissue and heart, it primarily hydrolyzes stored triglycerides to free fatty acids, while in steroidogenic tissues, it principally converts cholesteryl esters to free cholesterol for steroid hormone production. This is Hormone-sensitive lipase (LIPE) from Ictidomys tridecemlineatus (Thirteen-lined ground squirrel).